Reading from the N-terminus, the 166-residue chain is Small ribosomal subunit protein uS5 (166 aa).

In terms of domain architecture, S5 DRBM spans 11–74; the sequence is LQEKLIAVNR…EKARRNMKTV (64 aa).

This sequence belongs to the universal ribosomal protein uS5 family. Part of the 30S ribosomal subunit. Contacts proteins S4 and S8.

Functionally, with S4 and S12 plays an important role in translational accuracy. Its function is as follows. Located at the back of the 30S subunit body where it stabilizes the conformation of the head with respect to the body. This chain is Small ribosomal subunit protein uS5, found in Photorhabdus laumondii subsp. laumondii (strain DSM 15139 / CIP 105565 / TT01) (Photorhabdus luminescens subsp. laumondii).